We begin with the raw amino-acid sequence, 211 residues long: 1-deoxy-D-xylulose 5-phosphate reductoisomerase (211 aa).

D14 serves as a coordination point for Mn(2+). 1-deoxy-D-xylulose 5-phosphate-binding residues include S15, E16, S40, H63, S76, N81, K82, and E85. E16 is a Mn(2+) binding site. E85 contacts Mn(2+).

It belongs to the DXR family. It depends on Mn(2+) as a cofactor. The cofactor is Mg(2+). Mostly expressed in flowers and, to a lower extent, in leaves.

It is found in the plastid. Its subcellular location is the chloroplast stroma. It catalyses the reaction 2-C-methyl-D-erythritol 4-phosphate + NADP(+) = 1-deoxy-D-xylulose 5-phosphate + NADPH + H(+). It functions in the pathway isoprenoid biosynthesis; isopentenyl diphosphate biosynthesis via DXP pathway; isopentenyl diphosphate from 1-deoxy-D-xylulose 5-phosphate: step 1/6. In terms of biological role, enzyme of the plastid non-mevalonate pathway for isoprenoid biosynthesis that catalyzes the NADPH-dependent rearrangement and reduction of 1-deoxy-D-xylulose-5-phosphate (DXP) to 2-C-methyl-D-erythritol 4-phosphate (MEP). Required for chloroplast development. This Thymus vulgaris (Thyme) protein is 1-deoxy-D-xylulose 5-phosphate reductoisomerase.